We begin with the raw amino-acid sequence, 103 residues long: uncharacterized protein (103 aa).

This is an uncharacterized protein from Methanocaldococcus jannaschii (strain ATCC 43067 / DSM 2661 / JAL-1 / JCM 10045 / NBRC 100440) (Methanococcus jannaschii).